Consider the following 331-residue polypeptide: Proton-translocating ferredoxin:NAD(+) oxidoreductase complex subunit D (331 aa).

Helical transmembrane passes span 23 to 43 (ESVS…AVFG), 44 to 64 (VFNF…AAVV), and 84 to 106 (AFLT…MVAI). Threonine 163 is modified (FMN phosphoryl threonine). 4 consecutive transmembrane segments (helical) span residues 196–216 (NGSI…YLIY), 226–246 (VVMI…TGIF), 251–271 (VFHM…TDMV), and 273–293 (IPMT…LTSL).

It belongs to the NqrB/RnfD family. In terms of assembly, the complex is composed of six subunits: RnfA, RnfB, RnfC, RnfD, RnfE and RnfG. FMN is required as a cofactor.

The protein localises to the cell membrane. Its function is as follows. Part of a membrane-bound complex that couples electron transfer with translocation of ions across the membrane. Couples electron transfer from reduced ferredoxin to NAD(+) with translocation of H(+) out of the cell. Essential for energy conservation during autotrophic growth. Contributes to ATP synthesis during heterotrophic growth. The chain is Proton-translocating ferredoxin:NAD(+) oxidoreductase complex subunit D from Clostridium ljungdahlii (strain ATCC 55383 / DSM 13528 / PETC).